Consider the following 796-residue polypeptide: Armadillo repeat-containing protein wrm-1 (796 aa).

Residues 17-59 (NFNPMTPSTSRVSTPVRPSSTMSARQYSGSPFKAQPQNMEPSN) form a disordered region. Residues 462–504 (ESIHCIVQLIGCSDVTIVELATGTLRNIGLHNKMNKAFMVQDG) form an ARM repeat.

As to quaternary structure, interacts (independently of ARM repeat) with nhr-25. Component of the beta-catenin-lit-1 complex (also called the lit-1/wrm-1 complex or the wrm-1/lit-1 kinase complex) at least composed of lit-1 and wrm-1. Interacts (via N-terminus) with lit-1; the interaction is direct and activates lit-1 kinase activity which leads to the phosphorylation of pop-1. This promotes pop-1 interaction with par-5 and translocation of pop-1 from the nucleus to the cytoplasm.

It localises to the cytoplasm. It is found in the cell cortex. The protein localises to the nucleus. Functionally, antagonistic role in the Wnt signaling pathway that operates in embryogenesis. When located at the cortex it has been shown to inhibit Wnt signaling during asymmetric cell division but when relocated to the nucleus it shows positive regulation. Has a role in blastomere signaling during endoderm specification. Component of the beta-catenin-lit-1 complex which promotes phosphorylation, down-regulation and subcellular relocation of pop-1. Within the complex, activates lit-1-dependent kinase activity. Can substitute for bar-1 indicating functional redundancy. Appears to have a role in centrosome positioning and can activation transcription in yeast. Involved in the development of distal tip cells (DTC) by regulating the asymmetric distribution of cye-1 and cki-1 between the daughters of Z1.a and Z4.p cells. This is Armadillo repeat-containing protein wrm-1 from Caenorhabditis elegans.